The primary structure comprises 274 residues: PTS system sorbose-specific EIID component (274 aa).

Residues 4-273 (KKITQGDLVS…GIIGNALGFL (270 aa)) form the PTS EIID domain. 6 helical membrane passes run 61–81 (LVFF…TAAM), 99–119 (IKVG…WGTL), 126–146 (LGAS…FFIF), 186–206 (ILGL…NVPL), 226–246 (ILDQ…MVRL), and 253–273 (PVWL…LGFL).

Its subcellular location is the cell inner membrane. The phosphoenolpyruvate-dependent sugar phosphotransferase system (PTS), a major carbohydrate active transport system, catalyzes the phosphorylation of incoming sugar substrates concomitant with their translocation across the cell membrane. The enzyme II SorABFM PTS system is involved in sorbose transport. The chain is PTS system sorbose-specific EIID component from Klebsiella pneumoniae.